The following is a 176-amino-acid chain: NAD(P)H-quinone oxidoreductase subunit 6, chloroplastic (176 aa).

Helical transmembrane passes span 10–30, 32–52, 61–81, 92–112, and 152–172; these read FLLV…VLLP, PIYS…FYIL, AQLL…VMFM, LWTV…ISLI, and FFLP…GAIA.

It belongs to the complex I subunit 6 family. As to quaternary structure, NDH is composed of at least 16 different subunits, 5 of which are encoded in the nucleus.

The protein resides in the plastid. Its subcellular location is the chloroplast thylakoid membrane. It catalyses the reaction a plastoquinone + NADH + (n+1) H(+)(in) = a plastoquinol + NAD(+) + n H(+)(out). The catalysed reaction is a plastoquinone + NADPH + (n+1) H(+)(in) = a plastoquinol + NADP(+) + n H(+)(out). Functionally, NDH shuttles electrons from NAD(P)H:plastoquinone, via FMN and iron-sulfur (Fe-S) centers, to quinones in the photosynthetic chain and possibly in a chloroplast respiratory chain. The immediate electron acceptor for the enzyme in this species is believed to be plastoquinone. Couples the redox reaction to proton translocation, and thus conserves the redox energy in a proton gradient. This Nicotiana tabacum (Common tobacco) protein is NAD(P)H-quinone oxidoreductase subunit 6, chloroplastic (ndhG).